A 569-amino-acid chain; its full sequence is Membrane protein insertase YidC (569 aa).

A run of 8 helical transmembrane segments spans residues 7–24 (VLWV…DNYN), 219–239 (GSAL…PAIY), 299–319 (LYAV…TASM), 340–360 (FELV…FWLM), 366–386 (ILGN…LAFF), 436–456 (IGGC…YWVL), 485–505 (IGTF…SMFI), and 526–546 (PIAF…YWVV).

It belongs to the OXA1/ALB3/YidC family. Type 1 subfamily. In terms of assembly, interacts with the Sec translocase complex via SecD. Specifically interacts with transmembrane segments of nascent integral membrane proteins during membrane integration.

It localises to the cell inner membrane. Required for the insertion and/or proper folding and/or complex formation of integral membrane proteins into the membrane. Involved in integration of membrane proteins that insert both dependently and independently of the Sec translocase complex, as well as at least some lipoproteins. Aids folding of multispanning membrane proteins. The protein is Membrane protein insertase YidC of Herminiimonas arsenicoxydans.